Consider the following 120-residue polypeptide: Small ribosomal subunit protein uS17 (120 aa).

Residues 1–22 show a composition bias toward low complexity; it reads MMAEAKTGAKATKSAAAGAADG. A disordered region spans residues 1–46; sequence MMAEAKTGAKATKSAAAGAADGASKEKGPKHTPSPPKPSGRRKTRI.

The protein belongs to the universal ribosomal protein uS17 family. In terms of assembly, part of the 30S ribosomal subunit.

Its function is as follows. One of the primary rRNA binding proteins, it binds specifically to the 5'-end of 16S ribosomal RNA. In Mycobacterium ulcerans (strain Agy99), this protein is Small ribosomal subunit protein uS17.